Consider the following 89-residue polypeptide: Large ribosomal subunit protein bL27 (89 aa).

The disordered stretch occupies residues 1-24; it reads MAHKKGTGSTRNGRDSNAKRLGVK.

Belongs to the bacterial ribosomal protein bL27 family.

The polypeptide is Large ribosomal subunit protein bL27 (Synechococcus sp. (strain JA-2-3B'a(2-13)) (Cyanobacteria bacterium Yellowstone B-Prime)).